Here is a 215-residue protein sequence, read N- to C-terminus: Ras-related protein Rab-42 (215 aa).

GTP contacts are provided by glycine 19, glycine 21, lysine 22, threonine 23, and threonine 44. Mg(2+)-binding residues include threonine 23, threonine 44, and aspartate 68. GTP-binding residues include glycine 71, lysine 128, aspartate 130, alanine 157, and lysine 158. Positions 196 to 215 are disordered; the sequence is HRSPNPRSSSRKQDSGTCQC. Residues cysteine 213 and cysteine 215 are each lipidated (S-geranylgeranyl cysteine).

This sequence belongs to the small GTPase superfamily. Rab family. Mg(2+) serves as cofactor.

Its subcellular location is the membrane. The catalysed reaction is GTP + H2O = GDP + phosphate + H(+). Its activity is regulated as follows. Regulated by guanine nucleotide exchange factors (GEFs) which promote the exchange of bound GDP for free GTP. Regulated by GTPase activating proteins (GAPs) which increase the GTP hydrolysis activity. Inhibited by GDP dissociation inhibitors (GDIs). The small GTPases Rab are key regulators of intracellular membrane trafficking, from the formation of transport vesicles to their fusion with membranes. Rabs cycle between an inactive GDP-bound form and an active GTP-bound form that is able to recruit to membranes different sets of downstream effectors directly responsible for vesicle formation, movement, tethering and fusion. The physiological function of RAB42 remains undefined. This is Ras-related protein Rab-42 from Mus musculus (Mouse).